We begin with the raw amino-acid sequence, 145 residues long: Probable D-aminoacyl-tRNA deacylase (145 aa).

The protein belongs to the DTD family. Homodimer.

It is found in the cytoplasm. It carries out the reaction glycyl-tRNA(Ala) + H2O = tRNA(Ala) + glycine + H(+). The enzyme catalyses a D-aminoacyl-tRNA + H2O = a tRNA + a D-alpha-amino acid + H(+). Its function is as follows. An aminoacyl-tRNA editing enzyme that deacylates mischarged D-aminoacyl-tRNAs. Also deacylates mischarged glycyl-tRNA(Ala), protecting cells against glycine mischarging by AlaRS. Acts via tRNA-based rather than protein-based catalysis; rejects L-amino acids rather than detecting D-amino acids in the active site. By recycling D-aminoacyl-tRNA to D-amino acids and free tRNA molecules, this enzyme counteracts the toxicity associated with the formation of D-aminoacyl-tRNA entities in vivo and helps enforce protein L-homochirality. The sequence is that of Probable D-aminoacyl-tRNA deacylase from Shigella flexneri serotype 5b (strain 8401).